Here is a 131-residue protein sequence, read N- to C-terminus: L-ectoine synthase (131 aa).

This sequence belongs to the ectoine synthase family.

The catalysed reaction is (2S)-4-acetamido-2-aminobutanoate = L-ectoine + H2O. Its pathway is amine and polyamine biosynthesis; ectoine biosynthesis; L-ectoine from L-aspartate 4-semialdehyde: step 3/3. In terms of biological role, catalyzes the circularization of gamma-N-acetyl-alpha,gamma-diaminobutyric acid (ADABA) to ectoine (1,4,5,6-tetrahydro-2-methyl-4-pyrimidine carboxylic acid), which is an excellent osmoprotectant. The chain is L-ectoine synthase from Nocardia farcinica (strain IFM 10152).